We begin with the raw amino-acid sequence, 414 residues long: MSAIGDKNQFRIIVGSYEHNILCLSLDIPNQKENDAAKTPHFMPIFHFQAHSLSIKCLAVSRRYLVSGSNDEHIRIYDLQKRKELGTLLSHQGSITALQFSHPASSSEDAAVSKGSKNSKWLLSASEDHKIMVWRVKDWETVGTLKGHTARVNDVDIHPTNRIAISVSDDHSIRLWNLMTLRNAAVLKLRKYNTNGTCVRWLGAKGDYFAVGLRDRVLIYETGSAKVFKEIVFQRKTLMHIETHILPFDNKEYLSVGISDGNVHFYPCEELFEKVEENEKQEDDDDKEDISPAFSLLGHTNRIKDFKFYTNEFGTYLVTIGSDGKIVVWDMSTKEQVAVYDCGERLNCLTLCDESIEKYNTMKKRDAETADIGDQSEVESDTEELKKIMFGEKKKLNKKKRKQLKKSKVSVELE.

Position 2 is an N-acetylserine (Ser-2). WD repeat units lie at residues 50–78, 90–135, 147–177, 189–221, 238–267, and 298–330; these read AHSL…RIYD, SHQG…MVWR, GHTA…RLWN, LRKY…LIYE, LMHI…HFYP, and GHTN…VVWD. 2 positions are modified to phosphoserine: Ser-376 and Ser-380. At Thr-382 the chain carries Phosphothreonine.

In terms of assembly, associates with 60S pre-ribosomal particles.

It is found in the nucleus. The protein localises to the nucleolus. It localises to the nucleus membrane. Functionally, essential for cell growth. Plays a role in assembly of 60S pre-ribosomal particles in the nucleolus. Also required for replication of the M1 double-stranded RNA of the L-A virus. This latter function may reflect an enhanced requirement for free 60S ribosomal particles for the translation of viral mRNAs which lack poly-A tails. The polypeptide is Protein MAK11 (MAK11) (Saccharomyces cerevisiae (strain ATCC 204508 / S288c) (Baker's yeast)).